The primary structure comprises 193 residues: Potassium-transporting ATPase KdpC subunit (193 aa).

Residues 7 to 27 (PALVLFAALTLLTGVAYPLAV) form a helical membrane-spanning segment.

Belongs to the KdpC family. As to quaternary structure, the system is composed of three essential subunits: KdpA, KdpB and KdpC.

The protein resides in the cell inner membrane. Its function is as follows. Part of the high-affinity ATP-driven potassium transport (or Kdp) system, which catalyzes the hydrolysis of ATP coupled with the electrogenic transport of potassium into the cytoplasm. This subunit acts as a catalytic chaperone that increases the ATP-binding affinity of the ATP-hydrolyzing subunit KdpB by the formation of a transient KdpB/KdpC/ATP ternary complex. This chain is Potassium-transporting ATPase KdpC subunit, found in Rhodospirillum rubrum (strain ATCC 11170 / ATH 1.1.1 / DSM 467 / LMG 4362 / NCIMB 8255 / S1).